Reading from the N-terminus, the 930-residue chain is Wings apart-like protein 1 (930 aa).

A disordered region spans residues 540–566 (FSPTSMSGSQSSVSGNEPTTSKTRVGS). The segment covering 541–553 (SPTSMSGSQSSVS) has biased composition (low complexity). Residues 554-566 (GNEPTTSKTRVGS) are compositionally biased toward polar residues. A WAPL domain is found at 854 to 909 (KEAEKMIVEAYSALLLAFLSTESRSIRNSIKDYLPKRNLAILVPVLERFVAFHMTL).

It belongs to the WAPL family. Interacts with the cohesin complex throughout the cell cycle. In terms of tissue distribution, expressed in roots, leaves, buds and siliques.

The protein resides in the nucleus. It is found in the chromosome. Regulator of sister chromatid cohesion in meiosis which negatively regulates cohesin association with chromatin, acting as an antagonist of CTF7. Cohesion ensures that chromosome partitioning is accurate in both meiotic and mitotic cells and plays an important role in DNA repair. Essential for the prophase removal of cohesin during meiosis thus determining the timely release of meiotic cohesion. Important for proper spindle attachment and assembly during meiosis. Helps to prevent abnormal centromere association during prophase I in meiocytes. Required for early embryonic patterning. Also involved in chromosome segregation during mitosis. This chain is Wings apart-like protein 1, found in Arabidopsis thaliana (Mouse-ear cress).